The chain runs to 274 residues: 2,3,4,5-tetrahydropyridine-2,6-dicarboxylate N-succinyltransferase (274 aa).

Substrate contacts are provided by arginine 106 and aspartate 143.

It belongs to the transferase hexapeptide repeat family. As to quaternary structure, homotrimer.

It is found in the cytoplasm. It carries out the reaction (S)-2,3,4,5-tetrahydrodipicolinate + succinyl-CoA + H2O = (S)-2-succinylamino-6-oxoheptanedioate + CoA. It participates in amino-acid biosynthesis; L-lysine biosynthesis via DAP pathway; LL-2,6-diaminopimelate from (S)-tetrahydrodipicolinate (succinylase route): step 1/3. In Acidovorax sp. (strain JS42), this protein is 2,3,4,5-tetrahydropyridine-2,6-dicarboxylate N-succinyltransferase.